The chain runs to 309 residues: Homoserine O-succinyltransferase (309 aa).

The Acyl-thioester intermediate role is filled by Cys-142. 2 residues coordinate substrate: Lys-163 and Ser-192. His-235 serves as the catalytic Proton acceptor. Residue Glu-237 is part of the active site. Arg-249 provides a ligand contact to substrate.

Belongs to the MetA family.

The protein resides in the cytoplasm. It catalyses the reaction L-homoserine + succinyl-CoA = O-succinyl-L-homoserine + CoA. It functions in the pathway amino-acid biosynthesis; L-methionine biosynthesis via de novo pathway; O-succinyl-L-homoserine from L-homoserine: step 1/1. Functionally, transfers a succinyl group from succinyl-CoA to L-homoserine, forming succinyl-L-homoserine. This chain is Homoserine O-succinyltransferase, found in Yersinia enterocolitica serotype O:8 / biotype 1B (strain NCTC 13174 / 8081).